The following is a 40-amino-acid chain: Large ribosomal subunit protein bL36 (40 aa).

It belongs to the bacterial ribosomal protein bL36 family.

In Coxiella burnetii (strain Dugway 5J108-111), this protein is Large ribosomal subunit protein bL36.